Here is a 238-residue protein sequence, read N- to C-terminus: Sugar fermentation stimulation protein homolog (238 aa).

This sequence belongs to the SfsA family.

This chain is Sugar fermentation stimulation protein homolog, found in Pseudomonas entomophila (strain L48).